The primary structure comprises 222 residues: Pectate lyase A (222 aa).

A signal peptide spans 1–25 (MKKMLTLLLSAGLVASIFGVMPAAA).

Belongs to the polysaccharide lyase 3 family. The cofactor is Ca(2+).

The protein localises to the secreted. The enzyme catalyses Eliminative cleavage of (1-&gt;4)-alpha-D-galacturonan to give oligosaccharides with 4-deoxy-alpha-D-galact-4-enuronosyl groups at their non-reducing ends.. It carries out the reaction Eliminative cleavage of (1-&gt;4)-alpha-D-galacturonan methyl ester to give oligosaccharides with 4-deoxy-6-O-methyl-alpha-D-galact-4-enuronosyl groups at their non-reducing ends.. It functions in the pathway glycan metabolism; pectin degradation; 2-dehydro-3-deoxy-D-gluconate from pectin: step 2/5. With respect to regulation, strongly inhibited by Ba(2+). To a lesser extent, is also inhibited by Sn(2+), Mg(2+) and Ag(+). Inhibited by EDTA in vitro. In terms of biological role, catalyzes the depolymerization of both polygalacturonate and pectins of methyl esterification degree from 22 to 89%, with an endo mode of action. In contrast to the majority of pectate lyases, displays high activity on highly methylated pectins. Is not able to cleave trigalacturonate. Does not degrade xylans and carboxymethylcellulose (CMC). The protein is Pectate lyase A (pelA) of Paenibacillus barcinonensis.